The sequence spans 131 residues: Transcription antitermination protein NusB (131 aa).

This sequence belongs to the NusB family.

In terms of biological role, involved in transcription antitermination. Required for transcription of ribosomal RNA (rRNA) genes. Binds specifically to the boxA antiterminator sequence of the ribosomal RNA (rrn) operons. This is Transcription antitermination protein NusB from Campylobacter fetus subsp. fetus (strain 82-40).